The primary structure comprises 237 residues: Indole-3-glycerol phosphate synthase (237 aa).

Belongs to the TrpC family.

The catalysed reaction is 1-(2-carboxyphenylamino)-1-deoxy-D-ribulose 5-phosphate + H(+) = (1S,2R)-1-C-(indol-3-yl)glycerol 3-phosphate + CO2 + H2O. The protein operates within amino-acid biosynthesis; L-tryptophan biosynthesis; L-tryptophan from chorismate: step 4/5. The protein is Indole-3-glycerol phosphate synthase of Thermoplasma volcanium (strain ATCC 51530 / DSM 4299 / JCM 9571 / NBRC 15438 / GSS1).